We begin with the raw amino-acid sequence, 569 residues long: 4-hydroxy-7-methoxy-3-oxo-3,4-dihydro-2H-1,4-benzoxazin-2-yl glucoside beta-D-glucosidase 1b, chloroplastic (569 aa).

Residues 1-50 (MALLAAATLNPTTHLSLRSRAGRNSENLWLRSTASSQKSKGRFCNLTIRA) constitute a chloroplast transit peptide. Residues Gln92, His194, and 239 to 240 (NE) each bind a beta-D-glucoside. Glu240 acts as the Proton donor in catalysis. Cys259 and Cys265 form a disulfide bridge. A beta-D-glucoside-binding positions include Tyr383, Glu456, Trp504, 511 to 512 (EW), and Phe520. Catalysis depends on Glu456, which acts as the Nucleophile.

It belongs to the glycosyl hydrolase 1 family. In terms of assembly, homo- and heterohexamers. As to expression, expressed in young seedlings early after germination.

It is found in the plastid. It localises to the chloroplast. It carries out the reaction Hydrolysis of terminal, non-reducing beta-D-glucosyl residues with release of beta-D-glucose.. It catalyses the reaction DIMBOA beta-D-glucoside + H2O = DIMBOA + D-glucose. The catalysed reaction is DIBOA beta-D-glucoside + H2O = DIBOA + D-glucose. Acts in defense of young plant parts against pests via the production of hydroxamic acids from hydroxamic acid glucosides. Enzymatic activity is highly correlated with plant growth. The preferred substrate is DIMBOA-beta-D-glucoside. This Triticum aestivum (Wheat) protein is 4-hydroxy-7-methoxy-3-oxo-3,4-dihydro-2H-1,4-benzoxazin-2-yl glucoside beta-D-glucosidase 1b, chloroplastic (GLU1B).